Reading from the N-terminus, the 442-residue chain is DNA topoisomerase 6 subunit A3 (442 aa).

Positions M1 to S34 are disordered. Positions Q91 to V224 constitute a Topo IIA-type catalytic domain. Y185 acts as the O-(5'-phospho-DNA)-tyrosine intermediate in catalysis. Mg(2+) is bound by residues E271 and D323.

Belongs to the TOP6A family. Homodimer. Heterotetramer of two TOP6A and two TOP6B subunits. Interacts with TOP6B. Requires Mg(2+) as cofactor. Highly expressed in flowers before pollination. Expressed in roots and shoots.

The protein resides in the nucleus. It catalyses the reaction ATP-dependent breakage, passage and rejoining of double-stranded DNA.. In terms of biological role, component of the DNA topoisomerase VI involved in chromatin organization and progression of endoreduplication cycles. Relaxes both positive and negative superturns and exhibits a strong decatenase activity. May be involved in cell proliferation and stress tolerance. The protein is DNA topoisomerase 6 subunit A3 of Oryza sativa subsp. indica (Rice).